Consider the following 139-residue polypeptide: Heavy metal-associated isoprenylated plant protein 13 (139 aa).

Positions 3–70 constitute an HMA domain; it reads PMKAVLQLSI…LCNTELVSVE (68 aa). The disordered stretch occupies residues 70-94; sequence EVVKPPEKKPEPEKPAPPKPAPAPA. A compositionally biased stretch (basic and acidic residues) spans 73 to 85; that stretch reads KPPEKKPEPEKPA. Cys-136 carries the cysteine methyl ester modification. A lipid anchor (S-farnesyl cysteine) is attached at Cys-136. A propeptide spans 137–139 (removed in mature form); that stretch reads VIM.

Belongs to the HIPP family.

In terms of biological role, probable heavy-metal-binding protein. This is Heavy metal-associated isoprenylated plant protein 13 from Arabidopsis thaliana (Mouse-ear cress).